Reading from the N-terminus, the 444-residue chain is Adenylosuccinate synthetase (444 aa).

GTP is bound by residues 12–18 (GDEGKGK) and 40–42 (GHT). Asp-13 serves as the catalytic Proton acceptor. 2 residues coordinate Mg(2+): Asp-13 and Gly-40. Residues 13–16 (DEGK), 38–41 (NAGH), Thr-128, Arg-142, Gln-223, Thr-238, and Arg-302 contribute to the IMP site. Catalysis depends on His-41, which acts as the Proton donor. Substrate is bound at residue 298–304 (TTTGRRR). GTP is bound by residues Arg-304, 330-332 (KLD), and 412-414 (SLG).

Belongs to the adenylosuccinate synthetase family. As to quaternary structure, homodimer. The cofactor is Mg(2+).

It localises to the cytoplasm. The enzyme catalyses IMP + L-aspartate + GTP = N(6)-(1,2-dicarboxyethyl)-AMP + GDP + phosphate + 2 H(+). The protein operates within purine metabolism; AMP biosynthesis via de novo pathway; AMP from IMP: step 1/2. Functionally, plays an important role in the de novo pathway of purine nucleotide biosynthesis. Catalyzes the first committed step in the biosynthesis of AMP from IMP. The polypeptide is Adenylosuccinate synthetase (Synechococcus sp. (strain ATCC 27144 / PCC 6301 / SAUG 1402/1) (Anacystis nidulans)).